The primary structure comprises 457 residues: Siroheme synthase (457 aa).

Residues 1–204 (MDHLPIFCQL…NDQKAITETT (204 aa)) form a precorrin-2 dehydrogenase /sirohydrochlorin ferrochelatase region. NAD(+) contacts are provided by residues 22-23 (DV) and 43-44 (LA). Position 128 is a phosphoserine (Ser128). The segment at 216 to 457 (GEVVLVGAGP…RDKLNWFSNH (242 aa)) is uroporphyrinogen-III C-methyltransferase. S-adenosyl-L-methionine is bound at residue Pro225. Asp248 (proton acceptor) is an active-site residue. The active-site Proton donor is the Lys270. S-adenosyl-L-methionine is bound by residues 301–303 (GGD), Ile306, 331–332 (TA), Met382, and Gly411.

It in the N-terminal section; belongs to the precorrin-2 dehydrogenase / sirohydrochlorin ferrochelatase family. This sequence in the C-terminal section; belongs to the precorrin methyltransferase family.

The catalysed reaction is uroporphyrinogen III + 2 S-adenosyl-L-methionine = precorrin-2 + 2 S-adenosyl-L-homocysteine + H(+). It catalyses the reaction precorrin-2 + NAD(+) = sirohydrochlorin + NADH + 2 H(+). The enzyme catalyses siroheme + 2 H(+) = sirohydrochlorin + Fe(2+). Its pathway is cofactor biosynthesis; adenosylcobalamin biosynthesis; precorrin-2 from uroporphyrinogen III: step 1/1. The protein operates within cofactor biosynthesis; adenosylcobalamin biosynthesis; sirohydrochlorin from precorrin-2: step 1/1. It participates in porphyrin-containing compound metabolism; siroheme biosynthesis; precorrin-2 from uroporphyrinogen III: step 1/1. It functions in the pathway porphyrin-containing compound metabolism; siroheme biosynthesis; siroheme from sirohydrochlorin: step 1/1. Its pathway is porphyrin-containing compound metabolism; siroheme biosynthesis; sirohydrochlorin from precorrin-2: step 1/1. Functionally, multifunctional enzyme that catalyzes the SAM-dependent methylations of uroporphyrinogen III at position C-2 and C-7 to form precorrin-2 via precorrin-1. Then it catalyzes the NAD-dependent ring dehydrogenation of precorrin-2 to yield sirohydrochlorin. Finally, it catalyzes the ferrochelation of sirohydrochlorin to yield siroheme. This is Siroheme synthase from Escherichia coli O6:K15:H31 (strain 536 / UPEC).